We begin with the raw amino-acid sequence, 224 residues long: Protein YiiM (224 aa).

Positions 26–163 (IQVDGELMLT…VSADAPLELV (138 aa)) constitute an MOSC domain.

In terms of assembly, monomer.

The polypeptide is Protein YiiM (yiiM) (Escherichia coli (strain K12)).